Consider the following 391-residue polypeptide: Heme A synthase (391 aa).

The next 8 membrane-spanning stretches (helical) occupy residues 37–57, 121–141, 152–172, 186–206, 229–249, 298–318, 332–352, and 354–374; these read IRLW…VGGL, RQLG…FLAA, LLAL…MVAS, LATH…QALL, TTVL…VAGI, FLHR…WIFG, LLAM…LSAA, and WQVA…ILHA. Histidine 300 provides a ligand contact to heme. Histidine 360 contributes to the heme binding site.

This sequence belongs to the COX15/CtaA family. Type 2 subfamily. As to quaternary structure, interacts with CtaB. Heme b is required as a cofactor.

It localises to the cell membrane. The enzyme catalyses Fe(II)-heme o + 2 A + H2O = Fe(II)-heme a + 2 AH2. The protein operates within porphyrin-containing compound metabolism; heme A biosynthesis; heme A from heme O: step 1/1. In terms of biological role, catalyzes the conversion of heme O to heme A by two successive hydroxylations of the methyl group at C8. The first hydroxylation forms heme I, the second hydroxylation results in an unstable dihydroxymethyl group, which spontaneously dehydrates, resulting in the formyl group of heme A. In Cereibacter sphaeroides (strain KD131 / KCTC 12085) (Rhodobacter sphaeroides), this protein is Heme A synthase.